Reading from the N-terminus, the 176-residue chain is ATP synthase subunit b (176 aa).

The chain crosses the membrane as a helical span at residues 7-27 (IQIPDGSAIFVLLTFILLMFI). Residues 75–94 (SQSQATALMENARKSSEEQS) form a disordered region. The segment covering 85–94 (NARKSSEEQS) has biased composition (basic and acidic residues).

It belongs to the ATPase B chain family. As to quaternary structure, F-type ATPases have 2 components, F(1) - the catalytic core - and F(0) - the membrane proton channel. F(1) has five subunits: alpha(3), beta(3), gamma(1), delta(1), epsilon(1). F(0) has three main subunits: a(1), b(2) and c(10-14). The alpha and beta chains form an alternating ring which encloses part of the gamma chain. F(1) is attached to F(0) by a central stalk formed by the gamma and epsilon chains, while a peripheral stalk is formed by the delta and b chains.

It localises to the cell membrane. Functionally, f(1)F(0) ATP synthase produces ATP from ADP in the presence of a proton or sodium gradient. F-type ATPases consist of two structural domains, F(1) containing the extramembraneous catalytic core and F(0) containing the membrane proton channel, linked together by a central stalk and a peripheral stalk. During catalysis, ATP synthesis in the catalytic domain of F(1) is coupled via a rotary mechanism of the central stalk subunits to proton translocation. Its function is as follows. Component of the F(0) channel, it forms part of the peripheral stalk, linking F(1) to F(0). The protein is ATP synthase subunit b of Oenococcus oeni (strain ATCC BAA-331 / PSU-1).